Consider the following 155-residue polypeptide: Interleukin-2 (155 aa).

Positions 1–20 are cleaved as a signal peptide; the sequence is MYRMQLLSCIALTLALVANG. An O-linked (GalNAc...) threonine glycan is attached at threonine 23. Cysteine 79 and cysteine 127 are oxidised to a cystine.

This sequence belongs to the IL-2 family.

The protein resides in the secreted. In terms of biological role, cytokine produced by activated CD4-positive helper T-cells and to a lesser extend activated CD8-positive T-cells and natural killer (NK) cells that plays pivotal roles in the immune response and tolerance. Binds to a receptor complex composed of either the high-affinity trimeric IL-2R (IL2RA/CD25, IL2RB/CD122 and IL2RG/CD132) or the low-affinity dimeric IL-2R (IL2RB and IL2RG). Interaction with the receptor leads to oligomerization and conformation changes in the IL-2R subunits resulting in downstream signaling starting with phosphorylation of JAK1 and JAK3. In turn, JAK1 and JAK3 phosphorylate the receptor to form a docking site leading to the phosphorylation of several substrates including STAT5. This process leads to activation of several pathways including STAT, phosphoinositide-3-kinase/PI3K and mitogen-activated protein kinase/MAPK pathways. Functions as a T-cell growth factor and can increase NK-cell cytolytic activity as well. Promotes strong proliferation of activated B-cells and subsequently immunoglobulin production. Plays a pivotal role in regulating the adaptive immune system by controlling the survival and proliferation of regulatory T-cells, which are required for the maintenance of immune tolerance. Moreover, participates in the differentiation and homeostasis of effector T-cell subsets, including Th1, Th2, Th17 as well as memory CD8-positive T-cells. This Capra hircus (Goat) protein is Interleukin-2 (IL2).